A 419-amino-acid chain; its full sequence is Creatine kinase S-type, mitochondrial (419 aa).

Residues 1 to 39 (MASTFSKLLTGRNASLLFATLGTGALTTGYLLNKQNVCA) constitute a mitochondrion transit peptide. The interval 40–64 (AAREQHKLFPPSADYPDLRKHNNCM) is cardiolipin-binding. The region spanning 46-132 (KLFPPSADYP…FDPVIKLRHN (87 aa)) is the Phosphagen kinase N-terminal domain. One can recognise a Phosphagen kinase C-terminal domain in the interval 159–401 (YVLSSRVRTG…NYLVDCEKKL (243 aa)). Residues 162–166 (SSRVR) and H225 each bind ATP. A Phosphotyrosine modification is found at Y255. ATP is bound by residues R270, R326, 354-359 (RGTGGV), and D369. Position 356 is a phosphothreonine (T356).

This sequence belongs to the ATP:guanido phosphotransferase family. As to quaternary structure, exists as an octamer composed of four CKMT2 homodimers.

It is found in the mitochondrion inner membrane. The catalysed reaction is creatine + ATP = N-phosphocreatine + ADP + H(+). Its function is as follows. Reversibly catalyzes the transfer of phosphate between ATP and various phosphogens (e.g. creatine phosphate). Creatine kinase isoenzymes play a central role in energy transduction in tissues with large, fluctuating energy demands, such as skeletal muscle, heart, brain and spermatozoa. This is Creatine kinase S-type, mitochondrial (CKMT2) from Bos taurus (Bovine).